A 685-amino-acid chain; its full sequence is Methionine--tRNA ligase (685 aa).

Residues Cys-142, Cys-145, Cys-155, and Cys-158 each contribute to the Zn(2+) site. The 'KMSKS' region signature appears at 330 to 334 (KMSKS). Lys-333 contacts ATP. The 102-residue stretch at 584 to 685 (DFIKVDLRVA…SGAKPGDKVS (102 aa)) folds into the tRNA-binding domain.

It belongs to the class-I aminoacyl-tRNA synthetase family. MetG type 1 subfamily. In terms of assembly, homodimer. The cofactor is Zn(2+).

The protein resides in the cytoplasm. The enzyme catalyses tRNA(Met) + L-methionine + ATP = L-methionyl-tRNA(Met) + AMP + diphosphate. In terms of biological role, is required not only for elongation of protein synthesis but also for the initiation of all mRNA translation through initiator tRNA(fMet) aminoacylation. This is Methionine--tRNA ligase from Acinetobacter baylyi (strain ATCC 33305 / BD413 / ADP1).